A 686-amino-acid chain; its full sequence is Homoaconitase, mitochondrial (686 aa).

Residues Met-1–Ser-17 constitute a mitochondrion transit peptide. Cys-337, Cys-401, and Cys-404 together coordinate [4Fe-4S] cluster.

It belongs to the aconitase/IPM isomerase family. [4Fe-4S] cluster is required as a cofactor.

The protein localises to the mitochondrion. The enzyme catalyses (2R,3S)-homoisocitrate = cis-homoaconitate + H2O. It functions in the pathway amino-acid biosynthesis; L-lysine biosynthesis via AAA pathway; L-alpha-aminoadipate from 2-oxoglutarate: step 3/5. Catalyzes the reversible hydration of cis-homoaconitate to (2R,3S)-homoisocitrate, a step in the alpha-aminoadipate pathway for lysine biosynthesis. The chain is Homoaconitase, mitochondrial (LYS4) from Eremothecium gossypii (strain ATCC 10895 / CBS 109.51 / FGSC 9923 / NRRL Y-1056) (Yeast).